The sequence spans 101 residues: Gamma-secretase subunit PEN-2 (101 aa).

At 1–17 (MNLERVSNEEKLNLCRK) the chain is on the cytoplasmic side. An intramembrane region (helical) is located at residues 18–36 (YYLGGFAFLPFLWLVNIFW). Residues 37–57 (FFREAFLAPAYTEQSQIKGYV) lie on the Cytoplasmic side of the membrane. A helical transmembrane segment spans residues 58 to 78 (WRSAVGFLFWVIILATWITIF). At 79 to 101 (QIYRPRWGALGDYLSFTIPLGTP) the chain is on the lumenal side.

The protein belongs to the PEN-2 family. The functional gamma-secretase complex is composed of at least four polypeptides: a presenilin homodimer (PSEN1 or PSEN2), nicastrin (NCSTN), APH1 (APH1A or APH1B) and PSENEN.

The protein resides in the endoplasmic reticulum membrane. Its subcellular location is the golgi apparatus. It localises to the golgi stack membrane. It is found in the cell membrane. The protein localises to the membrane. Essential subunit of the gamma-secretase complex, an endoprotease complex that catalyzes the intramembrane cleavage of integral membrane proteins such as Notch receptors and APP (amyloid-beta precursor protein). The gamma-secretase complex plays a role in Notch and Wnt signaling cascades and regulation of downstream processes via its role in processing key regulatory proteins, and by regulating cytosolic CTNNB1 levels. PSENEN modulates both endoproteolysis of presenilin and gamma-secretase activity. The chain is Gamma-secretase subunit PEN-2 (Psenen) from Mus musculus (Mouse).